The primary structure comprises 93 residues: MNGIKYAVFTDKSIRLLGKNQYTFNVESGSTRTEIKHWVELFFDVKVIAMNSHRLPVKGRRVRPIMGHTMHYRRMIITLQPGYSIPPLRKKKT.

It belongs to the universal ribosomal protein uL23 family. Part of the 50S ribosomal subunit.

Its subcellular location is the plastid. The protein localises to the chloroplast. Its function is as follows. Binds to 23S rRNA. The polypeptide is Large ribosomal subunit protein uL23cz/uL23cy (rpl23-A) (Glycine max (Soybean)).